The following is a 440-amino-acid chain: Ribulose bisphosphate carboxylase large chain (440 aa).

At Lys-4 the chain carries N6,N6,N6-trimethyllysine. Positions 113 and 163 each coordinate substrate. The active-site Proton acceptor is Lys-165. Lys-167 is a binding site for substrate. Mg(2+)-binding residues include Lys-191, Asp-193, and Glu-194. Position 191 is an N6-carboxylysine (Lys-191). His-284 (proton acceptor) is an active-site residue. Positions 285, 317, and 369 each coordinate substrate.

This sequence belongs to the RuBisCO large chain family. Type I subfamily. Heterohexadecamer of 8 large chains and 8 small chains; disulfide-linked. The disulfide link is formed within the large subunit homodimers. It depends on Mg(2+) as a cofactor. In terms of processing, the disulfide bond which can form in the large chain dimeric partners within the hexadecamer appears to be associated with oxidative stress and protein turnover.

The protein localises to the plastid. It localises to the chloroplast. It carries out the reaction 2 (2R)-3-phosphoglycerate + 2 H(+) = D-ribulose 1,5-bisphosphate + CO2 + H2O. The enzyme catalyses D-ribulose 1,5-bisphosphate + O2 = 2-phosphoglycolate + (2R)-3-phosphoglycerate + 2 H(+). Functionally, ruBisCO catalyzes two reactions: the carboxylation of D-ribulose 1,5-bisphosphate, the primary event in carbon dioxide fixation, as well as the oxidative fragmentation of the pentose substrate in the photorespiration process. Both reactions occur simultaneously and in competition at the same active site. The chain is Ribulose bisphosphate carboxylase large chain from Dicksonia antarctica (Australian tree fern).